We begin with the raw amino-acid sequence, 82 residues long: Putative membrane protein insertion efficiency factor (82 aa).

Belongs to the UPF0161 family.

Its subcellular location is the cell inner membrane. Functionally, could be involved in insertion of integral membrane proteins into the membrane. This chain is Putative membrane protein insertion efficiency factor, found in Rickettsia felis (strain ATCC VR-1525 / URRWXCal2) (Rickettsia azadi).